Consider the following 294-residue polypeptide: Putative isocitrate dehydrogenase [NAD] subunit-like 4 (294 aa).

It belongs to the isocitrate and isopropylmalate dehydrogenases family.

Functionally, performs an essential role in the oxidative function of the citric acid cycle. The chain is Putative isocitrate dehydrogenase [NAD] subunit-like 4 (IDH4) from Arabidopsis thaliana (Mouse-ear cress).